The following is a 214-amino-acid chain: Phosphatidylserine decarboxylase proenzyme (214 aa).

Ser-183 acts as the Schiff-base intermediate with substrate; via pyruvic acid in catalysis. Position 183 is a pyruvic acid (Ser); by autocatalysis (Ser-183).

The protein belongs to the phosphatidylserine decarboxylase family. PSD-A subfamily. In terms of assembly, heterodimer of a large membrane-associated beta subunit and a small pyruvoyl-containing alpha subunit. The cofactor is pyruvate. Post-translationally, is synthesized initially as an inactive proenzyme. Formation of the active enzyme involves a self-maturation process in which the active site pyruvoyl group is generated from an internal serine residue via an autocatalytic post-translational modification. Two non-identical subunits are generated from the proenzyme in this reaction, and the pyruvate is formed at the N-terminus of the alpha chain, which is derived from the carboxyl end of the proenzyme. The post-translation cleavage follows an unusual pathway, termed non-hydrolytic serinolysis, in which the side chain hydroxyl group of the serine supplies its oxygen atom to form the C-terminus of the beta chain, while the remainder of the serine residue undergoes an oxidative deamination to produce ammonia and the pyruvoyl prosthetic group on the alpha chain.

It is found in the cell membrane. The enzyme catalyses a 1,2-diacyl-sn-glycero-3-phospho-L-serine + H(+) = a 1,2-diacyl-sn-glycero-3-phosphoethanolamine + CO2. The protein operates within phospholipid metabolism; phosphatidylethanolamine biosynthesis; phosphatidylethanolamine from CDP-diacylglycerol: step 2/2. Catalyzes the formation of phosphatidylethanolamine (PtdEtn) from phosphatidylserine (PtdSer). In Syntrophotalea carbinolica (strain DSM 2380 / NBRC 103641 / GraBd1) (Pelobacter carbinolicus), this protein is Phosphatidylserine decarboxylase proenzyme.